Here is a 247-residue protein sequence, read N- to C-terminus: Carboxy-S-adenosyl-L-methionine synthase (247 aa).

Residues Tyr-40, 65-67 (GAS), 90-91 (DN), 122-123 (DI), Asn-137, and Arg-204 each bind S-adenosyl-L-methionine.

The protein belongs to the class I-like SAM-binding methyltransferase superfamily. Cx-SAM synthase family. As to quaternary structure, homodimer.

It catalyses the reaction prephenate + S-adenosyl-L-methionine = carboxy-S-adenosyl-L-methionine + 3-phenylpyruvate + H2O. Functionally, catalyzes the conversion of S-adenosyl-L-methionine (SAM) to carboxy-S-adenosyl-L-methionine (Cx-SAM). The polypeptide is Carboxy-S-adenosyl-L-methionine synthase (Pseudomonas entomophila (strain L48)).